Reading from the N-terminus, the 261-residue chain is uncharacterized protein (261 aa).

4 residues coordinate NADP(+): Ile-33, Lys-60, Asp-78, and Asn-105. Catalysis depends on Ser-157, which acts as the Proton donor. NADP(+)-binding residues include Tyr-172, Lys-176, and Thr-206. Tyr-172 (proton acceptor) is an active-site residue. The Lowers pKa of active site Tyr role is filled by Lys-176.

Belongs to the short-chain dehydrogenases/reductases (SDR) family.

It is found in the cytoplasm. The protein resides in the nucleus. This is an uncharacterized protein from Schizosaccharomyces pombe (strain 972 / ATCC 24843) (Fission yeast).